The primary structure comprises 803 residues: Xylosyltransferase sqv-6 (803 aa).

Over 3-13 (VVGGVNTNYRH) the chain is Cytoplasmic. The helical; Signal-anchor for type II membrane protein transmembrane segment at 14-34 (YALVIVLFFFLNVYLLYSAQN) threads the bilayer. The Lumenal portion of the chain corresponds to 35–803 (SVQIRKDEGE…GWDEEARILR (769 aa)). An intrachain disulfide couples Cys-63 to Cys-91. 3 N-linked (GlcNAc...) asparagine glycosylation sites follow: Asn-95, Asn-175, and Asn-224. Cystine bridges form between Cys-107–Cys-446, Cys-465–Cys-479, and Cys-467–Cys-477. Residues 115–209 (IDQRIGCFLD…FNAVEIFRTD (95 aa)) form the WSC domain. Residues Asp-265 and 294-296 (TIW) each bind UDP-alpha-D-xylose. Asn-326 carries an N-linked (GlcNAc...) asparagine glycan. UDP-alpha-D-xylose is bound at residue 399–400 (DW). Residues Ser-480 and 506-507 (RK) contribute to the UDP-alpha-D-xylose site. N-linked (GlcNAc...) asparagine glycosylation is found at Asn-615 and Asn-718. Cysteines 769 and 775 form a disulfide.

The protein belongs to the glycosyltransferase 14 family. XylT subfamily. A divalent metal cation serves as cofactor.

The protein localises to the endoplasmic reticulum membrane. The protein resides in the golgi apparatus membrane. The catalysed reaction is UDP-alpha-D-xylose + L-seryl-[protein] = 3-O-(beta-D-xylosyl)-L-seryl-[protein] + UDP + H(+). It functions in the pathway glycan metabolism; chondroitin sulfate biosynthesis. It participates in glycan metabolism; heparan sulfate biosynthesis. In terms of biological role, catalyzes the first step in biosynthesis of glycosaminoglycan. Transfers D-xylose from UDP-D-xylose to specific serine residues of the core protein. This chain is Xylosyltransferase sqv-6, found in Caenorhabditis briggsae.